The primary structure comprises 70 residues: Small ribosomal subunit protein bS21C (70 aa).

It belongs to the bacterial ribosomal protein bS21 family.

This Burkholderia pseudomallei (strain 1710b) protein is Small ribosomal subunit protein bS21C.